The chain runs to 460 residues: Notoamide biosynthesis cluster transcriptional coactivator notR (460 aa).

Residues 74–145 (LQDLARQVEI…EPMPNYVSHT (72 aa)) form the HTH iclR-type domain. Positions 107–126 (IQDLADLAGVPDIQLRRVIR) form a DNA-binding region, H-T-H motif. The disordered stretch occupies residues 300–320 (TRDFTPQPESSPRPGSASSRV).

The protein localises to the nucleus. In terms of biological role, transcription factor that probably regulates the expression of the gene cluster that mediates the biosynthesis of notoamide, a fungal indole alkaloid that belongs to a family of natural products containing a characteristic bicyclo[2.2.2]diazaoctane core. This is Notoamide biosynthesis cluster transcriptional coactivator notR from Aspergillus sp. (strain MF297-2).